A 487-amino-acid chain; its full sequence is Betaine aldehyde dehydrogenase (487 aa).

Residues S26 and D93 each contribute to the K(+) site. NAD(+) is bound at residue 150-152; the sequence is GAW. K162 functions as the Charge relay system in the catalytic mechanism. Residues 176–179 and 229–232 each bind NAD(+); these read KPSE and SVPT. L244 contributes to the K(+) binding site. E250 serves as the catalytic Proton acceptor. Residues G252, C284, and E384 each coordinate NAD(+). C284 acts as the Nucleophile in catalysis. The residue at position 284 (C284) is a Cysteine sulfenic acid (-SOH). K(+) contacts are provided by K454 and G457. Catalysis depends on E461, which acts as the Charge relay system.

This sequence belongs to the aldehyde dehydrogenase family. As to quaternary structure, dimer of dimers. K(+) serves as cofactor.

It carries out the reaction betaine aldehyde + NAD(+) + H2O = glycine betaine + NADH + 2 H(+). It participates in amine and polyamine biosynthesis; betaine biosynthesis via choline pathway; betaine from betaine aldehyde: step 1/1. Functionally, involved in the biosynthesis of the osmoprotectant glycine betaine. Catalyzes the irreversible oxidation of betaine aldehyde to the corresponding acid. The sequence is that of Betaine aldehyde dehydrogenase from Rhizobium etli (strain ATCC 51251 / DSM 11541 / JCM 21823 / NBRC 15573 / CFN 42).